Here is an 89-residue protein sequence, read N- to C-terminus: Large ribosomal subunit protein bL27 (89 aa).

Residues 1 to 22 are disordered; the sequence is MAHKKAGGSSRNGRDSAGRRLG.

Belongs to the bacterial ribosomal protein bL27 family.

In Dinoroseobacter shibae (strain DSM 16493 / NCIMB 14021 / DFL 12), this protein is Large ribosomal subunit protein bL27.